Consider the following 319-residue polypeptide: Putative metal ion transporter YfjQ (319 aa).

2 helical membrane-spanning segments follow: residues 254–274 (IMMTLTIVSTIFIPLTFIAGV) and 290–310 (GYFAVLGLMAALVIGMLIWFV).

The protein belongs to the CorA metal ion transporter (MIT) (TC 1.A.35) family.

It localises to the cell membrane. In Bacillus subtilis (strain 168), this protein is Putative metal ion transporter YfjQ (yfjQ).